Consider the following 253-residue polypeptide: uncharacterized protein (253 aa).

The next 6 membrane-spanning stretches (helical) occupy residues 17 to 37 (MWLL…HIIA), 46 to 66 (IFGF…VFVF), 93 to 113 (LAAS…YGIW), 139 to 159 (MYGL…WTVF), 172 to 192 (AMVL…SPLV), and 222 to 242 (IHLS…LLIM).

Its subcellular location is the cell membrane. This is an uncharacterized protein from Bacillus subtilis (strain 168).